We begin with the raw amino-acid sequence, 399 residues long: uncharacterized protein (399 aa).

The next 5 helical transmembrane spans lie at 26–46, 266–286, 301–321, 324–344, and 358–378; these read LLTI…ISLG, VITI…AVGI, IGIL…FVVE, FLGL…AEVI, and AWIS…VGVI.

It belongs to the ABC-4 integral membrane protein family.

Its subcellular location is the cell membrane. This is an uncharacterized protein from Methanocaldococcus jannaschii (strain ATCC 43067 / DSM 2661 / JAL-1 / JCM 10045 / NBRC 100440) (Methanococcus jannaschii).